We begin with the raw amino-acid sequence, 466 residues long: Ras-GEF domain-containing family member 1C (466 aa).

The segment at 1-37 is disordered; sequence MPQTLSASDMVTPGSLSPPPTEPTDGEQAGQPLLDGA. Positions 34–164 constitute an N-terminal Ras-GEF domain; that stretch reads LDGAPSSASL…LLQALHQKLA (131 aa). The Ras-GEF domain maps to 200-446; sequence DPYTLAQQLT…YLASYESESP (247 aa).

Guanine nucleotide exchange factor (GEF). This is Ras-GEF domain-containing family member 1C (RASGEF1C) from Homo sapiens (Human).